The chain runs to 86 residues: uncharacterized protein (86 aa).

This is an uncharacterized protein from Vaccinia virus (strain Copenhagen) (VACV).